Consider the following 331-residue polypeptide: Anthranilate phosphoribosyltransferase (331 aa).

5-phospho-alpha-D-ribose 1-diphosphate-binding positions include Gly78, 81-82, Ser86, 88-91, 106-114, and Ser118; these read GD, NIST, and KHGNKSITS. Gly78 contributes to the anthranilate binding site. Ser90 contacts Mg(2+). Asn109 lines the anthranilate pocket. Arg163 contacts anthranilate. Asp222 and Glu223 together coordinate Mg(2+).

Belongs to the anthranilate phosphoribosyltransferase family. As to quaternary structure, homodimer. Requires Mg(2+) as cofactor.

The catalysed reaction is N-(5-phospho-beta-D-ribosyl)anthranilate + diphosphate = 5-phospho-alpha-D-ribose 1-diphosphate + anthranilate. Its pathway is amino-acid biosynthesis; L-tryptophan biosynthesis; L-tryptophan from chorismate: step 2/5. Its function is as follows. Catalyzes the transfer of the phosphoribosyl group of 5-phosphorylribose-1-pyrophosphate (PRPP) to anthranilate to yield N-(5'-phosphoribosyl)-anthranilate (PRA). The sequence is that of Anthranilate phosphoribosyltransferase from Staphylococcus epidermidis (strain ATCC 35984 / DSM 28319 / BCRC 17069 / CCUG 31568 / BM 3577 / RP62A).